Reading from the N-terminus, the 75-residue chain is MSGCGCGSSCNCGDSCKCNKRSSGLSYSEMETTETVILGVGPAKIQFEGAEMSAASEDGGCKCGDNCTCDPCNCK.

This sequence belongs to the metallothionein superfamily. Type 15 family.

Functionally, metallothioneins have a high content of cysteine residues that bind various heavy metals. The polypeptide is Metallothionein-like protein 1 (MTA) (Pisum sativum (Garden pea)).